An 80-amino-acid polypeptide reads, in one-letter code: Acyl carrier protein (80 aa).

A Carrier domain is found at 4 to 79 (DEIFSKVRSI…DVVNFIKKRK (76 aa)). Ser-39 is subject to O-(pantetheine 4'-phosphoryl)serine.

It belongs to the acyl carrier protein (ACP) family. In terms of processing, 4'-phosphopantetheine is transferred from CoA to a specific serine of apo-ACP by AcpS. This modification is essential for activity because fatty acids are bound in thioester linkage to the sulfhydryl of the prosthetic group.

Its subcellular location is the cytoplasm. It functions in the pathway lipid metabolism; fatty acid biosynthesis. Its function is as follows. Carrier of the growing fatty acid chain in fatty acid biosynthesis. The polypeptide is Acyl carrier protein (Borreliella burgdorferi (strain ATCC 35210 / DSM 4680 / CIP 102532 / B31) (Borrelia burgdorferi)).